A 521-amino-acid polypeptide reads, in one-letter code: GMP synthase [glutamine-hydrolyzing] (521 aa).

Residues 5 to 197 (KILILDFGSQ…VLDICGAQPG (193 aa)) form the Glutamine amidotransferase type-1 domain. Cys-81 serves as the catalytic Nucleophile. Residues His-171 and Glu-173 contribute to the active site. The GMPS ATP-PPase domain occupies 198-390 (WTMPNYIEEA…LGLPREMVYR (193 aa)). ATP is bound at residue 225–231 (SGGVDSS).

As to quaternary structure, homodimer.

It carries out the reaction XMP + L-glutamine + ATP + H2O = GMP + L-glutamate + AMP + diphosphate + 2 H(+). Its pathway is purine metabolism; GMP biosynthesis; GMP from XMP (L-Gln route): step 1/1. Catalyzes the synthesis of GMP from XMP. This chain is GMP synthase [glutamine-hydrolyzing] (guaA), found in Neisseria meningitidis serogroup A / serotype 4A (strain DSM 15465 / Z2491).